The sequence spans 178 residues: Fatty-acid and retinol-binding protein 1 (178 aa).

A signal peptide spans 1-16 (MYHQLILMALIGVIMA). Asparagine 44 and asparagine 75 each carry an N-linked (GlcNAc...) asparagine glycan. Coiled-coil stretches lie at residues 67 to 89 (DAAL…ELRN) and 122 to 154 (QKLD…LKAT). Asparagine 157 carries an N-linked (GlcNAc...) asparagine glycan.

This sequence belongs to the fatty-acid and retinol-binding protein (FARBP) family. In terms of processing, N-glycosylated.

It is found in the secreted. Binds retinol and different fatty acids. The polypeptide is Fatty-acid and retinol-binding protein 1 (Onchocerca dukei (Filarial nematode worm)).